Reading from the N-terminus, the 115-residue chain is Nucleoid-associated protein LA_4332 (115 aa).

This sequence belongs to the YbaB/EbfC family. As to quaternary structure, homodimer.

Its subcellular location is the cytoplasm. It is found in the nucleoid. In terms of biological role, binds to DNA and alters its conformation. May be involved in regulation of gene expression, nucleoid organization and DNA protection. In Leptospira interrogans serogroup Icterohaemorrhagiae serovar Lai (strain 56601), this protein is Nucleoid-associated protein LA_4332.